A 463-amino-acid polypeptide reads, in one-letter code: Phosphoglucosamine mutase (463 aa).

Residue Ser102 is the Phosphoserine intermediate of the active site. 4 residues coordinate Mg(2+): Ser102, Asp240, Asp242, and Asp244. Residue Ser102 is modified to Phosphoserine.

Belongs to the phosphohexose mutase family. The cofactor is Mg(2+). In terms of processing, activated by phosphorylation.

The catalysed reaction is alpha-D-glucosamine 1-phosphate = D-glucosamine 6-phosphate. In terms of biological role, catalyzes the conversion of glucosamine-6-phosphate to glucosamine-1-phosphate. This chain is Phosphoglucosamine mutase, found in Mycobacterium leprae (strain Br4923).